The following is a 685-amino-acid chain: Putative alpha-1,3-mannosyltransferase MNN14 (685 aa).

At 1 to 13 (MGLLSIPYQSKSK) the chain is on the cytoplasmic side. Residues 14–34 (LWIAIFLVVWSLISMHFIWQS) form a helical membrane-spanning segment. Residues 35–685 (QANSGLILKN…EIWMRGYNYL (651 aa)) are Lumenal-facing. N-linked (GlcNAc...) asparagine glycosylation is found at N199, N338, N408, and N556.

It belongs to the MNN1/MNT family.

Its subcellular location is the golgi apparatus membrane. It functions in the pathway protein modification; protein glycosylation. Functionally, responsible for addition of the terminal mannose residues to the outer chain of core N-linked polysaccharides and to O-linked mannotriose. Implicated in late Golgi modifications. Involved in virulence. This Candida albicans (strain SC5314 / ATCC MYA-2876) (Yeast) protein is Putative alpha-1,3-mannosyltransferase MNN14 (MNN14).